Reading from the N-terminus, the 410-residue chain is PHAF1 protein At3g51130 (410 aa).

This sequence belongs to the PHAF1 family.

This chain is PHAF1 protein At3g51130, found in Arabidopsis thaliana (Mouse-ear cress).